The following is a 303-amino-acid chain: Nucleotide-binding protein Dvul_1502 (303 aa).

23 to 30 (GLSGAGKS) provides a ligand contact to ATP. 75-78 (DLRE) lines the GTP pocket.

The protein belongs to the RapZ-like family.

Displays ATPase and GTPase activities. The sequence is that of Nucleotide-binding protein Dvul_1502 from Nitratidesulfovibrio vulgaris (strain DP4) (Desulfovibrio vulgaris).